We begin with the raw amino-acid sequence, 370 residues long: Cobalt-precorrin-5B C(1)-methyltransferase (370 aa).

Belongs to the CbiD family.

The catalysed reaction is Co-precorrin-5B + S-adenosyl-L-methionine = Co-precorrin-6A + S-adenosyl-L-homocysteine. The protein operates within cofactor biosynthesis; adenosylcobalamin biosynthesis; cob(II)yrinate a,c-diamide from sirohydrochlorin (anaerobic route): step 6/10. Functionally, catalyzes the methylation of C-1 in cobalt-precorrin-5B to form cobalt-precorrin-6A. In Prochlorococcus marinus (strain MIT 9312), this protein is Cobalt-precorrin-5B C(1)-methyltransferase.